The primary structure comprises 495 residues: Cytochrome P450 2E1 (495 aa).

298–303 (FAGTET) is a binding site for substrate. Cysteine 437 contributes to the heme binding site.

Belongs to the cytochrome P450 family. As to quaternary structure, interacts with chaperones HSP70 and HSP90; this interaction is required for initial targeting to mitochondria. It depends on heme as a cofactor.

The protein resides in the endoplasmic reticulum membrane. The protein localises to the microsome membrane. It localises to the mitochondrion inner membrane. It catalyses the reaction an organic molecule + reduced [NADPH--hemoprotein reductase] + O2 = an alcohol + oxidized [NADPH--hemoprotein reductase] + H2O + H(+). The catalysed reaction is (5Z,8Z,11Z)-eicosatrienoate + reduced [NADPH--hemoprotein reductase] + O2 = 19-hydroxy-(5Z,8Z,11Z)-eicosatrienoate + oxidized [NADPH--hemoprotein reductase] + H2O + H(+). The enzyme catalyses (5Z,8Z,11Z,14Z,17Z)-eicosapentaenoate + reduced [NADPH--hemoprotein reductase] + O2 = 19-hydroxy-(5Z,8Z,11Z,14Z,17Z)-eicosapentaenoate + oxidized [NADPH--hemoprotein reductase] + H2O + H(+). It carries out the reaction (4Z,7Z,10Z,13Z,16Z,19Z)-docosahexaenoate + reduced [NADPH--hemoprotein reductase] + O2 = 21-hydroxy-(4Z,7Z,10Z,13Z,16Z,19Z)-docosahexaenoate + oxidized [NADPH--hemoprotein reductase] + H2O + H(+). It catalyses the reaction dodecanoate + reduced [NADPH--hemoprotein reductase] + O2 = 11-hydroxydodecanoate + oxidized [NADPH--hemoprotein reductase] + H2O + H(+). The catalysed reaction is tetradecanoate + reduced [NADPH--hemoprotein reductase] + O2 = 13-hydroxytetradecanoate + oxidized [NADPH--hemoprotein reductase] + H2O + H(+). The enzyme catalyses 4-nitrophenol + NADPH + O2 + H(+) = 4-nitrocatechol + NADP(+) + H2O. The protein operates within lipid metabolism; fatty acid metabolism. With respect to regulation, the omega-1 hydroxylase activity is stimulated by cytochrome b5. In terms of biological role, a cytochrome P450 monooxygenase involved in the metabolism of fatty acids. Mechanistically, uses molecular oxygen inserting one oxygen atom into a substrate, and reducing the second into a water molecule, with two electrons provided by NADPH via cytochrome P450 reductase (NADPH--hemoprotein reductase). Catalyzes the hydroxylation of carbon-hydrogen bonds. Hydroxylates fatty acids specifically at the omega-1 position displaying the highest catalytic activity for saturated fatty acids. May be involved in the oxidative metabolism of xenobiotics. The polypeptide is Cytochrome P450 2E1 (CYP2E1) (Bos taurus (Bovine)).